The sequence spans 299 residues: GTPase Era (299 aa).

The Era-type G domain maps to 5–172 (KSGFVSIIGR…IDVLKTYLPE (168 aa)). The G1 stretch occupies residues 13–20 (GRPNVGKS). Position 13–20 (13–20 (GRPNVGKS)) interacts with GTP. A G2 region spans residues 39 to 43 (QTTRN). Positions 60–63 (DTPG) are G3. Residues 60 to 64 (DTPGI) and 122 to 125 (NKID) each bind GTP. Positions 122 to 125 (NKID) are G4. The interval 151–153 (ISA) is G5. In terms of domain architecture, KH type-2 spans 203–280 (TSEEIPHAIG…YLELWVKVQR (78 aa)).

Belongs to the TRAFAC class TrmE-Era-EngA-EngB-Septin-like GTPase superfamily. Era GTPase family. Monomer.

It is found in the cytoplasm. It localises to the cell membrane. An essential GTPase that binds both GDP and GTP, with rapid nucleotide exchange. Plays a role in 16S rRNA processing and 30S ribosomal subunit biogenesis and possibly also in cell cycle regulation and energy metabolism. The polypeptide is GTPase Era (Staphylococcus aureus (strain Mu3 / ATCC 700698)).